The sequence spans 46 residues: Iota-conotoxin-like R11.7 (46 aa).

4-hydroxyproline is present on residues proline 2 and proline 11. Cystine bridges form between cysteine 5/cysteine 19, cysteine 12/cysteine 22, cysteine 18/cysteine 27, and cysteine 21/cysteine 38. Proline 29 bears the 4-hydroxyproline mark. At phenylalanine 44 the chain carries D-phenylalanine.

The protein belongs to the conotoxin I1 superfamily. As to expression, expressed by the venom duct.

The protein localises to the secreted. Functionally, iota-conotoxins bind to voltage-gated sodium channels (Nav) and act as agonists by shifting the voltage-dependence of activation to more hyperpolarized levels. Produces general excitatory symptoms. The polypeptide is Iota-conotoxin-like R11.7 (Conus radiatus (Rayed cone)).